Consider the following 463-residue polypeptide: Asparagine--tRNA ligase (463 aa).

It belongs to the class-II aminoacyl-tRNA synthetase family. Homodimer.

It localises to the cytoplasm. It carries out the reaction tRNA(Asn) + L-asparagine + ATP = L-asparaginyl-tRNA(Asn) + AMP + diphosphate + H(+). The sequence is that of Asparagine--tRNA ligase from Clostridium botulinum (strain ATCC 19397 / Type A).